Consider the following 807-residue polypeptide: MAAPEAWRARSCWFCEVAAATTMEATSREAAPAKSSASGPSAPPALFELCGRAVSAHMGVLESGVWALPGPILQSILPLLNIYYLERIEETALKKGLSTQAIWRRLWDELMKTRPSSLESVTCWRAKFMEAFFSHVLRGTIDVSSDKRLCDQRFSPLLHSSRHVRQLTICNMLQGATELVAEPNRRVLETLASSLHTLKFRHLLFSDVAAQQSLRQLLHQLIHHGAVSQVSLYSWPVPESALFILILTMSAGFWQPGPGSLPCRLCGEASRGRAPSRDEGSLLLGSRRPRRDAAERCAAALMATRRKSEVKQMPRAVPPTRVTRRSTQESLAIGGTDSKLYLPATSYEASGTKQPSAPAAASASSSTSSKRAPASSASQPKPLKRFKRAAGKKGPRTRQGSGAESEDLYDFVFIVAGEKEDGEEMEIGEVACGALDGSDPSCLGLPALEASQRFRSISTLELFTVPLSTEAALTLCHLLSSWVSLESLTLSYNGLGSNIFRLLDSLRALSGQAGCRLRALHLSDLFSPLPILELTRAIVRALPLLRVLSIRVDHPSQRDNPAVPENAGPPGHIVGDEEIPENCLEQLEMGFPRGAQPAPLLCSVLKASGSLQQLSLDSATFASPQDFGLVLQTLKEHNLSLKRLSFHDMNLADCQSEVLFLLKNLTLQEITFSFCRLFEKRPVQFLPEMVAAMKGNSTLKGLRLPGNRLGNAGLLALADVFSEDSSSSLCQLDISSNCIKPDGLLEFAKRLERWGRGAFGHLRLFQNWLDQDAVTAREAIRRLRATCHVVSDSWDSTQAFADYVSTM.

The interval 45–54 (ALFELCGRAV) is interaction with Elongin BC complex. Phosphoserine is present on residues Ser155, Ser276, and Ser326. Disordered regions lie at residues 269 to 290 (ASRG…RRPR), 304 to 335 (TRRK…AIGG), and 349 to 403 (ASGT…GSGA). Phosphothreonine is present on Thr327. Over residues 352–381 (TKQPSAPAAASASSSTSSKRAPASSASQPK) the composition is skewed to low complexity. A Phosphoserine modification is found at Ser368. Positions 382–396 (PLKRFKRAAGKKGPR) are enriched in basic residues. 7 LRR repeats span residues 482 to 502 (WVSL…IFRL), 513 to 525 (AGCR…LSDL), 526 to 550 (FSPL…VLSI), 608 to 632 (SGSL…LVLQ), 638 to 661 (NLSL…VLFL), 696 to 723 (NSTL…VFSE), and 726 to 747 (SSSL…LLEF).

As to quaternary structure, part of an E3 ubiquitin-protein ligase complex with Elongin BC (ELOB and ELOC), RBX1 and CUL5. Component of a probable ECS(LRRC41) complex which contains CUL5, RNF7/RBX2, Elongin BC and LRRC41. Interacts with CUL5, RNF7, ELOB and ELOC.

It participates in protein modification; protein ubiquitination. Its function is as follows. Probable substrate recognition component of an ECS (Elongin BC-CUL2/5-SOCS-box protein) E3 ubiquitin ligase complex which mediates the ubiquitination and subsequent proteasomal degradation of target proteins. This Mus musculus (Mouse) protein is Leucine-rich repeat-containing protein 41 (Lrrc41).